The following is a 167-amino-acid chain: NAD(P)H-quinone oxidoreductase subunit I, chloroplastic (167 aa).

4Fe-4S ferredoxin-type domains lie at 55 to 84 (GRIH…VDWK) and 95 to 124 (LNYS…MTEE). The [4Fe-4S] cluster site is built by Cys64, Cys67, Cys70, Cys74, Cys104, Cys107, Cys110, and Cys114.

This sequence belongs to the complex I 23 kDa subunit family. In terms of assembly, NDH is composed of at least 16 different subunits, 5 of which are encoded in the nucleus. Requires [4Fe-4S] cluster as cofactor.

The protein resides in the plastid. Its subcellular location is the chloroplast thylakoid membrane. It catalyses the reaction a plastoquinone + NADH + (n+1) H(+)(in) = a plastoquinol + NAD(+) + n H(+)(out). The enzyme catalyses a plastoquinone + NADPH + (n+1) H(+)(in) = a plastoquinol + NADP(+) + n H(+)(out). NDH shuttles electrons from NAD(P)H:plastoquinone, via FMN and iron-sulfur (Fe-S) centers, to quinones in the photosynthetic chain and possibly in a chloroplast respiratory chain. The immediate electron acceptor for the enzyme in this species is believed to be plastoquinone. Couples the redox reaction to proton translocation, and thus conserves the redox energy in a proton gradient. The protein is NAD(P)H-quinone oxidoreductase subunit I, chloroplastic of Solanum tuberosum (Potato).